The following is a 466-amino-acid chain: Voltage-gated potassium channel regulatory subunit KCNG2 (466 aa).

Over 1–174 (MEPWPCSPGG…DVVDNPHSGL (174 aa)) the chain is Cytoplasmic. The tract at residues 131–155 (AEARAGPTERGAQGSPARALGPRGR) is disordered. A helical transmembrane segment spans residues 175-196 (AGKLFACVSVSFVAVTAVGLCL). Over 197–217 (STMPDIRAEEERGECSPKCRS) the chain is Extracellular. The helical transmembrane segment at 218–239 (LFVLETVCVAWFSFEFLLRSLQ) threads the bilayer. Topologically, residues 240–250 (AESKCAFLRAP) are cytoplasmic. The chain crosses the membrane as a helical span at residues 251-271 (LNIIDILALLPFYVSLLLGLA). At 272 to 283 (AGPGGTKLLERA) the chain is on the extracellular side. Residues 284–304 (GLVLRLLRALRVLYVMRLARH) form a helical; Voltage-sensor membrane-spanning segment. Residues 305-319 (SLGLRSLGLTMRRCA) lie on the Cytoplasmic side of the membrane. Residues 320-341 (REFGLLLLFLCVAMALFAPLVH) traverse the membrane as a helical segment. The Extracellular segment spans residues 342–356 (LAERELGARRDFSSV). The helical intramembrane region spans 357 to 368 (PASYWWAVISMT). A Selectivity filter motif is present at residues 369-374 (TVGYGD). An intramembrane segment occupies 369–376 (TVGYGDMV). The Extracellular portion of the chain corresponds to 377 to 383 (PRSLPGQ). Residues 384–412 (VVALSSILSGILLMAFPVTSIFHTFSRSY) form a helical membrane-spanning segment. Over 413 to 466 (SELKEQQQRAASPEPALQEDSTHSATATEDSSQGPDSAGLADDSADALWVRAGR) the chain is Cytoplasmic. The segment at 416-466 (KEQQQRAASPEPALQEDSTHSATATEDSSQGPDSAGLADDSADALWVRAGR) is disordered. The span at 435-447 (HSATATEDSSQGP) shows a compositional bias: polar residues. Residues 448-460 (DSAGLADDSADAL) show a composition bias toward low complexity.

Belongs to the potassium channel family. G (TC 1.A.1.2) subfamily. Kv6.2/KCNG2 sub-subfamily. In terms of assembly, heterodimer with KCNB1. In terms of tissue distribution, highly expressed in heart, liver, skeletal muscle, kidney and pancreas. Detected at low levels in brain, lung and placenta.

It localises to the cell membrane. In terms of biological role, regulatory alpha-subunit of the voltage-gated potassium (Kv) channel which, when coassembled with KCNB1, can modulate the kinetics and conductance-voltage relationship. Modulates channel activity by shifting the threshold and the half-maximal activation to more negative values. Potassium channel subunit that does not form functional channels by itself. The chain is Voltage-gated potassium channel regulatory subunit KCNG2 from Homo sapiens (Human).